The chain runs to 450 residues: Glutamyl-tRNA(Gln) amidotransferase subunit A, mitochondrial (450 aa).

Active-site charge relay system residues include K47 and S122. S146 acts as the Acyl-ester intermediate in catalysis.

The protein belongs to the amidase family. GatA subfamily. In terms of assembly, subunit of the heterotrimeric GatFAB amidotransferase (AdT) complex, composed of A, B and F subunits.

The protein localises to the mitochondrion. It carries out the reaction L-glutamyl-tRNA(Gln) + L-glutamine + ATP + H2O = L-glutaminyl-tRNA(Gln) + L-glutamate + ADP + phosphate + H(+). In terms of biological role, allows the formation of correctly charged Gln-tRNA(Gln) through the transamidation of misacylated Glu-tRNA(Gln) in the mitochondria. The reaction takes place in the presence of glutamine and ATP through an activated gamma-phospho-Glu-tRNA(Gln). The sequence is that of Glutamyl-tRNA(Gln) amidotransferase subunit A, mitochondrial from Candida albicans (strain WO-1) (Yeast).